The chain runs to 384 residues: MAP kinase-activated protein kinase 3 (384 aa).

N-acetylmethionine is present on M1. The segment at 1 to 33 (MDGETAGEKGSLVPPPGALGGSALGGAPAPGVR) is disordered. The 261-residue stretch at 46-306 (QLSKQVLGLG…IMQFMNHPWI (261 aa)) folds into the Protein kinase domain. ATP-binding positions include 52 to 60 (LGLGVNGKV) and K75. Catalysis depends on D168, which acts as the Proton acceptor. Position 203 is a phosphothreonine; by MAPK14 (T203). Residue S253 is modified to Phosphoserine; by MAPK14. A Phosphoserine; by autocatalysis modification is found at S309. The segment at 309–345 (SMVVPQTPLYTARVLQEDKDHWDDVKEEMTSALATMR) is autoinhibitory helix. A Phosphothreonine; by MAPK14 modification is found at T315. The Nuclear export signal (NES) signature appears at 337–346 (MTSALATMRV). The segment at 347-371 (DYDQVKIKDLKTSNNRLLNKRRKKQ) is p38 MAPK-binding site. 2 consecutive short sequence motifs (bipartite nuclear localization signal) follow at residues 352-355 (KIKD) and 366-370 (KRRKK). Residues 359-384 (SNNRLLNKRRKKQAGSSSASQGCNNQ) are disordered. Residues 372-384 (AGSSSASQGCNNQ) are compositionally biased toward polar residues.

It belongs to the protein kinase superfamily. CAMK Ser/Thr protein kinase family. In terms of assembly, heterodimer with p38-alpha/MAPK14. The heterodimer with p38-alpha/MAPK14 forms a stable complex: molecules are positioned 'face to face' so that the ATP-binding sites of both kinases are at the heterodimer interface. Interacts with TCF3 and with polycomb proteins, such as PCH2 and BMI1/PCGF4. Post-translationally, phosphorylated and activated by MAPK1/ERK2 and MAPK3/ERK1. Phosphorylated and activated by MAP kinase p38-alpha/MAPK14 at Thr-201, Ser-251 and Thr-313. Isoform 3 is degraded following phosphorylation at Thr-203. Ubiquitously expressed (at protein level). Isoform 3 is expressed in skeletal muscles and heart.

It localises to the nucleus. The protein resides in the cytoplasm. The catalysed reaction is L-seryl-[protein] + ATP = O-phospho-L-seryl-[protein] + ADP + H(+). It catalyses the reaction L-threonyl-[protein] + ATP = O-phospho-L-threonyl-[protein] + ADP + H(+). Its activity is regulated as follows. Activated following phosphorylation by p38-alpha/MAPK14 following various stresses. Inhibited by ligand 5B (2'-[2-(1,3-benzodioxol-5-yl)pyrimidin-4-yl]-5',6'-dihydrospiro[piperidine-4,7'-pyrrolo[3,2-c]pyridin]- 4'(1'h)-one) and ligand P4O (2-[2-(2-fluorophenyl)pyridin-4-yl]-1,5,6,7-tetrahydro- 4h-pyrrolo[3,2-c]pyridin-4-one), 2 ATP-competitive inhibitors. In terms of biological role, stress-activated serine/threonine-protein kinase involved in cytokines production, endocytosis, cell migration, chromatin remodeling and transcriptional regulation. Following stress, it is phosphorylated and activated by MAP kinase p38-alpha/MAPK14, leading to phosphorylation of substrates. Phosphorylates serine in the peptide sequence, Hyd-X-R-X(2)-S, where Hyd is a large hydrophobic residue. MAPKAPK2 and MAPKAPK3, share the same function and substrate specificity, but MAPKAPK3 kinase activity and level in protein expression are lower compared to MAPKAPK2. Phosphorylates HSP27/HSPB1, KRT18, KRT20, RCSD1, RPS6KA3, TAB3 and TTP/ZFP36. Mediates phosphorylation of HSP27/HSPB1 in response to stress, leading to dissociate HSP27/HSPB1 from large small heat-shock protein (sHsps) oligomers and impair their chaperone activities and ability to protect against oxidative stress effectively. Involved in inflammatory response by regulating tumor necrosis factor (TNF) and IL6 production post-transcriptionally: acts by phosphorylating AU-rich elements (AREs)-binding proteins, such as TTP/ZFP36, leading to regulate the stability and translation of TNF and IL6 mRNAs. Phosphorylation of TTP/ZFP36, a major post-transcriptional regulator of TNF, promotes its binding to 14-3-3 proteins and reduces its ARE mRNA affinity leading to inhibition of dependent degradation of ARE-containing transcript. Involved in toll-like receptor signaling pathway (TLR) in dendritic cells: required for acute TLR-induced macropinocytosis by phosphorylating and activating RPS6KA3. Also acts as a modulator of Polycomb-mediated repression. This is MAP kinase-activated protein kinase 3 (Mapkapk3) from Mus musculus (Mouse).